The primary structure comprises 392 residues: Chaperone protein DnaJ (392 aa).

A J domain is found at 2 to 67 (DYYTILGVAK…QKRESYDRYG (66 aa)). The segment at 149–227 (GVEKELLVSG…CRGQGRIKDK (79 aa)) adopts a CR-type zinc-finger fold. Zn(2+)-binding residues include cysteine 162, cysteine 165, cysteine 179, cysteine 182, cysteine 201, cysteine 204, cysteine 215, and cysteine 218. CXXCXGXG motif repeat units follow at residues 162 to 169 (CDACSGSG), 179 to 186 (CDRCKGSG), 201 to 208 (CPDCSGEG), and 215 to 222 (CSVCRGQG).

It belongs to the DnaJ family. Homodimer. Zn(2+) is required as a cofactor.

The protein resides in the cytoplasm. Its function is as follows. Participates actively in the response to hyperosmotic and heat shock by preventing the aggregation of stress-denatured proteins and by disaggregating proteins, also in an autonomous, DnaK-independent fashion. Unfolded proteins bind initially to DnaJ; upon interaction with the DnaJ-bound protein, DnaK hydrolyzes its bound ATP, resulting in the formation of a stable complex. GrpE releases ADP from DnaK; ATP binding to DnaK triggers the release of the substrate protein, thus completing the reaction cycle. Several rounds of ATP-dependent interactions between DnaJ, DnaK and GrpE are required for fully efficient folding. Also involved, together with DnaK and GrpE, in the DNA replication of plasmids through activation of initiation proteins. This is Chaperone protein DnaJ from Chlamydia trachomatis serovar L2 (strain ATCC VR-902B / DSM 19102 / 434/Bu).